Reading from the N-terminus, the 921-residue chain is Probable serine/threonine-protein kinase DDB_G0275165 (921 aa).

Residues 23 to 277 (FDPLSIIGSG…SNILGLLEYI (255 aa)) enclose the Protein kinase domain. Residues 29 to 37 (IGSGGFGKV) and K50 each bind ATP. The active-site Proton acceptor is D147. Disordered regions lie at residues 289-453 (DYEP…SFPR), 465-492 (RGEE…NEED), 530-571 (RPWN…SDSN), 583-653 (NPTP…PTTI), 671-698 (STAT…SNNN), 737-813 (IQPL…SRSL), 833-858 (SSQQ…TSQF), and 877-921 (FEKS…KPKK). Low complexity-rich tracts occupy residues 310-352 (NNNN…NNNN), 400-412 (SNIN…NNSN), and 429-445 (NING…NNNN). Low complexity-rich tracts occupy residues 539–550 (NNNNKNNNNNEK) and 583–638 (NPTP…SLSS). Residues 643-653 (PQSTYKVPTTI) show a composition bias toward polar residues. Composition is skewed to low complexity over residues 748-775 (TVAA…PTST), 842-857 (QPSS…PTSQ), and 892-910 (TSSS…PSSP).

The protein belongs to the protein kinase superfamily. TKL Ser/Thr protein kinase family.

It carries out the reaction L-seryl-[protein] + ATP = O-phospho-L-seryl-[protein] + ADP + H(+). The catalysed reaction is L-threonyl-[protein] + ATP = O-phospho-L-threonyl-[protein] + ADP + H(+). This is Probable serine/threonine-protein kinase DDB_G0275165 from Dictyostelium discoideum (Social amoeba).